Reading from the N-terminus, the 560-residue chain is Dihydroxy-acid dehydratase (560 aa).

C52 provides a ligand contact to [2Fe-2S] cluster. Position 84 (D84) interacts with Mg(2+). [2Fe-2S] cluster is bound at residue C125. Positions 126 and 127 each coordinate Mg(2+). The residue at position 127 (K127) is an N6-carboxylysine. [2Fe-2S] cluster is bound at residue C197. E449 serves as a coordination point for Mg(2+). Residue S475 is the Proton acceptor of the active site.

This sequence belongs to the IlvD/Edd family. As to quaternary structure, homodimer. The cofactor is [2Fe-2S] cluster. It depends on Mg(2+) as a cofactor.

It carries out the reaction (2R)-2,3-dihydroxy-3-methylbutanoate = 3-methyl-2-oxobutanoate + H2O. The enzyme catalyses (2R,3R)-2,3-dihydroxy-3-methylpentanoate = (S)-3-methyl-2-oxopentanoate + H2O. It functions in the pathway amino-acid biosynthesis; L-isoleucine biosynthesis; L-isoleucine from 2-oxobutanoate: step 3/4. Its pathway is amino-acid biosynthesis; L-valine biosynthesis; L-valine from pyruvate: step 3/4. In terms of biological role, functions in the biosynthesis of branched-chain amino acids. Catalyzes the dehydration of (2R,3R)-2,3-dihydroxy-3-methylpentanoate (2,3-dihydroxy-3-methylvalerate) into 2-oxo-3-methylpentanoate (2-oxo-3-methylvalerate) and of (2R)-2,3-dihydroxy-3-methylbutanoate (2,3-dihydroxyisovalerate) into 2-oxo-3-methylbutanoate (2-oxoisovalerate), the penultimate precursor to L-isoleucine and L-valine, respectively. The polypeptide is Dihydroxy-acid dehydratase (Sulfurisphaera tokodaii (strain DSM 16993 / JCM 10545 / NBRC 100140 / 7) (Sulfolobus tokodaii)).